The primary structure comprises 612 residues: Probable cytosolic Fe-S cluster assembly factor SJAG_02895 (612 aa).

13–20 is a binding site for ATP; sequence GKGGVGKS. C200 and C203 together coordinate [4Fe-4S] cluster. 7 WD repeats span residues 287 to 326, 330 to 370, 375 to 414, 420 to 459, 464 to 503, 528 to 566, and 574 to 612; these read GHRG…LIHV, YHTR…WECV, GHEN…EFDC, EHTQ…WVQT, SHTS…EDAA, TFTE…STWH, and AHDV…DQTA.

In the N-terminal section; belongs to the Mrp/NBP35 ATP-binding proteins family. NUBP2/CFD1 subfamily. The protein in the C-terminal section; belongs to the WD repeat CIA1 family. In terms of assembly, heterotetramer of 2 nbp35 and 2 SJAG_02895 chains. Requires [4Fe-4S] cluster as cofactor.

Its subcellular location is the cytoplasm. It is found in the nucleus. Its function is as follows. Fusion protein of two essential components of the cytosolic iron-sulfur (Fe/S) protein assembly (CIA) machinery. Required for maturation of extramitochondrial Fe-S proteins. May form a heterotetramer with nubp35, functioning as a Fe-S scaffold complex, mediating the de novo assembly of an Fe-S cluster and its transfer to target apoproteins. This is Probable cytosolic Fe-S cluster assembly factor SJAG_02895 from Schizosaccharomyces japonicus (strain yFS275 / FY16936) (Fission yeast).